Consider the following 968-residue polypeptide: RNA polymerase-associated protein RapA (968 aa).

One can recognise a Helicase ATP-binding domain in the interval 164-334; it reads DVGRRHAPRV…FARLRLLDPN (171 aa). 177-184 provides a ligand contact to ATP; sequence DEVGLGKT. Positions 280-283 match the DEAH box motif; sequence DEAH. In terms of domain architecture, Helicase C-terminal spans 490-662; sequence RVEWLMGYLT…YLASPDQTEG (173 aa).

The protein belongs to the SNF2/RAD54 helicase family. RapA subfamily. As to quaternary structure, interacts with the RNAP. Has a higher affinity for the core RNAP than for the holoenzyme. Its ATPase activity is stimulated by binding to RNAP.

Functionally, transcription regulator that activates transcription by stimulating RNA polymerase (RNAP) recycling in case of stress conditions such as supercoiled DNA or high salt concentrations. Probably acts by releasing the RNAP, when it is trapped or immobilized on tightly supercoiled DNA. Does not activate transcription on linear DNA. Probably not involved in DNA repair. This is RNA polymerase-associated protein RapA from Escherichia coli O1:K1 / APEC.